A 262-amino-acid chain; its full sequence is Thiazole synthase (262 aa).

Residue Lys-104 is the Schiff-base intermediate with DXP of the active site. Residues Gly-165, 191 to 192 (AG), and 213 to 214 (NT) each bind 1-deoxy-D-xylulose 5-phosphate.

The protein belongs to the ThiG family. Homotetramer. Forms heterodimers with either ThiH or ThiS.

The protein resides in the cytoplasm. It carries out the reaction [ThiS sulfur-carrier protein]-C-terminal-Gly-aminoethanethioate + 2-iminoacetate + 1-deoxy-D-xylulose 5-phosphate = [ThiS sulfur-carrier protein]-C-terminal Gly-Gly + 2-[(2R,5Z)-2-carboxy-4-methylthiazol-5(2H)-ylidene]ethyl phosphate + 2 H2O + H(+). It participates in cofactor biosynthesis; thiamine diphosphate biosynthesis. Functionally, catalyzes the rearrangement of 1-deoxy-D-xylulose 5-phosphate (DXP) to produce the thiazole phosphate moiety of thiamine. Sulfur is provided by the thiocarboxylate moiety of the carrier protein ThiS. In vitro, sulfur can be provided by H(2)S. This is Thiazole synthase from Nitrosococcus oceani (strain ATCC 19707 / BCRC 17464 / JCM 30415 / NCIMB 11848 / C-107).